A 512-amino-acid chain; its full sequence is Gamma-aminobutyric acid receptor subunit beta-2 (512 aa).

The first 25 residues, 1–25 (MWRVRKRGYFGIWSFPLIIAAVCAQ), serve as a signal peptide directing secretion. The Extracellular segment spans residues 26–241 (SVNDPSNMSL…LSLSFKLKRN (216 aa)). 2 N-linked (GlcNAc...) asparagine glycosylation sites follow: Asn-32 and Asn-104. Tyr-121 is a binding site for histamine. A disulfide bond links Cys-160 and Cys-174. Residue Asn-173 is glycosylated (N-linked (GlcNAc...) asparagine). Residues 180–181 (SY) and Thr-226 contribute to the histamine site. Tyr-181 and Thr-226 together coordinate 4-aminobutanoate. A helical membrane pass occupies residues 242–262 (IGYFILQTYMPSILITILSWV). Topologically, residues 263–272 (SFWINYDASA) are cytoplasmic. The helical transmembrane segment at 273–292 (ARVALGITTVLTMTTINTHL) threads the bilayer. Residues 293–310 (RETLPKIPYVKAIDMYLM) are Extracellular-facing. A helical transmembrane segment spans residues 311–331 (GCFVFVFMALLEYALVNYIFF). The Cytoplasmic segment spans residues 332–490 (GRGPQRQKKA…LTDVNAIDRW (159 aa)). Tyr-441 carries the post-translational modification Phosphotyrosine. A helical transmembrane segment spans residues 491–511 (SRIFFPVVFSFFNIVYWLYYV). A topological domain (extracellular) is located at residue Asn-512.

It belongs to the ligand-gated ion channel (TC 1.A.9) family. Gamma-aminobutyric acid receptor (TC 1.A.9.5) subfamily. GABRB2 sub-subfamily. As to quaternary structure, heteropentamer, formed by a combination of alpha (GABRA1-6), beta (GABRB1-3), gamma (GABRG1-3), delta (GABRD), epsilon (GABRE), rho (GABRR1-3), pi (GABRP) and theta (GABRQ) chains, each subunit exhibiting distinct physiological and pharmacological properties. Interacts with UBQLN1. May interact with KIF21B. Identified in a complex of 720 kDa composed of LHFPL4, NLGN2, GABRA1, GABRB2, GABRG2 and GABRB3. In terms of tissue distribution, isoform 1 and isoform 2 show reduced expression in schizophrenic brain. Isoform 3 shows increased expression in schizophrenic and bipolar disorder brains while isoform 4 shows reduced expression.

It is found in the postsynaptic cell membrane. The protein localises to the cell membrane. Its subcellular location is the cytoplasmic vesicle membrane. The enzyme catalyses chloride(in) = chloride(out). Its activity is regulated as follows. Allosterically activated by benzodiazepines. Allosterically activated by the anesthetic etomidate. Inhibited by the antagonist bicuculline. Potentiated by histamine. In terms of biological role, beta subunit of the heteropentameric ligand-gated chloride channel gated by gamma-aminobutyric acid (GABA), a major inhibitory neurotransmitter in the brain. GABA-gated chloride channels, also named GABA(A) receptors (GABAAR), consist of five subunits arranged around a central pore and contain GABA active binding site(s) located at the alpha and beta subunit interface(s). When activated by GABA, GABAARs selectively allow the flow of chloride anions across the cell membrane down their electrochemical gradient. Chloride influx into the postsynaptic neuron following GABAAR opening decreases the neuron ability to generate a new action potential, thereby reducing nerve transmission. GABAARs containing alpha-1 and beta-2 or -3 subunits exhibit synaptogenic activity; the gamma-2 subunit being necessary but not sufficient to induce rapid synaptic contacts formation. Extrasynaptic beta-2 receptors contribute to the tonic GABAergic inhibition. Beta-containing GABAARs can simultaneously bind GABA and histamine where histamine binds at the interface of two neighboring beta subunits, which may be involved in the regulation of sleep and wakefulness. This chain is Gamma-aminobutyric acid receptor subunit beta-2, found in Homo sapiens (Human).